The sequence spans 172 residues: Endoribonuclease YbeY (172 aa).

The segment at 1–21 (MTLHVGAEPAPREDDTEDALR) is disordered. A compositionally biased stretch (basic and acidic residues) spans 10–21 (APREDDTEDALR). His-134, His-138, and His-144 together coordinate Zn(2+).

The protein belongs to the endoribonuclease YbeY family. It depends on Zn(2+) as a cofactor.

It is found in the cytoplasm. Single strand-specific metallo-endoribonuclease involved in late-stage 70S ribosome quality control and in maturation of the 3' terminus of the 16S rRNA. This chain is Endoribonuclease YbeY, found in Burkholderia lata (strain ATCC 17760 / DSM 23089 / LMG 22485 / NCIMB 9086 / R18194 / 383).